The following is a 153-amino-acid chain: Large ribosomal subunit protein uL22 (153 aa).

The protein belongs to the universal ribosomal protein uL22 family. As to quaternary structure, part of the 50S ribosomal subunit.

This protein binds specifically to 23S rRNA. It makes multiple contacts with different domains of the 23S rRNA in the assembled 50S subunit and ribosome. Its function is as follows. The globular domain of the protein is located near the polypeptide exit tunnel on the outside of the subunit, while an extended beta-hairpin is found that lines the wall of the exit tunnel in the center of the 70S ribosome. This Methanococcus maripaludis (strain DSM 14266 / JCM 13030 / NBRC 101832 / S2 / LL) protein is Large ribosomal subunit protein uL22.